The chain runs to 264 residues: uncharacterized protein (264 aa).

3 helical membrane-spanning segments follow: residues 48 to 68, 112 to 132, and 142 to 162; these read LTITLLYLHPVSFSAILLLVF, ITPSAISSGLLVSLVLIFLLA, and LPIAIWIGLISLHPKLRSYLI. Serine 260 carries the post-translational modification Phosphoserine.

The protein resides in the membrane. This is an uncharacterized protein from Schizosaccharomyces pombe (strain 972 / ATCC 24843) (Fission yeast).